Here is a 403-residue protein sequence, read N- to C-terminus: MAMVVNQWQENISADPGSQLQMCSQEPGGTPGTPSGSTPGNDALSGDKIPNVDCMVCGDKSSGKHYGQFTCEGCKSFFKRSVRRNLSYTCRGNRDCPIDQHHRNQCQYCRLKKCLKVGMRREAVQRGRMSNSQSSPGQYLSNGSDPYNGQPYLSGFISLLLRAEPYPTSRYGAQCMQSNNLMGIENICELAARLLFSAVEWAKNIPFFPDLQLMDQVALLRMSWSELFVLNAAQCSMPLHVAPLLAAAGLHASPMSAERVVAFMDHIRVFQEQVEKLKALQVDTAEYSCLKSIVLFTSDAMGLSDVAHVESIQEKSQCALEEYVRNQYPNQPNRFGRLLLRLPSLRIVSSPVIEQLFFVRLVGKTPIETLLRDMLLSGSSYNWPYMPVQRDRPISIHYNENGP.

Residues 16-44 (PGSQLQMCSQEPGGTPGTPSGSTPGNDAL) are disordered. The nuclear receptor DNA-binding region spans 51 to 126 (NVDCMVCGDK…VGMRREAVQR (76 aa)). 2 consecutive NR C4-type zinc fingers follow at residues 54 to 74 (CMVC…CEGC) and 90 to 114 (CRGN…LKKC). The 227-residue stretch at 152-378 (YLSGFISLLL…TLLRDMLLSG (227 aa)) folds into the NR LBD domain.

The protein belongs to the nuclear hormone receptor family. NR2 subfamily.

It localises to the nucleus. Putative receptor that is required in photoreceptor cells precursors during eye development. The protein is Nuclear receptor subfamily 2 group F member 5 (nr2f5) of Danio rerio (Zebrafish).